We begin with the raw amino-acid sequence, 247 residues long: Protein GrpE (247 aa).

Disordered stretches follow at residues 1–64 and 214–247; these read MNDE…QALD and SMGP…EKSD. Polar residues-rich tracts occupy residues 30-39, 49-63, and 228-241; these read DEPSLSNVAE, DVTS…SQAL, and TEQS…TDQQ.

It belongs to the GrpE family. In terms of assembly, homodimer.

Its subcellular location is the cytoplasm. Functionally, participates actively in the response to hyperosmotic and heat shock by preventing the aggregation of stress-denatured proteins, in association with DnaK and GrpE. It is the nucleotide exchange factor for DnaK and may function as a thermosensor. Unfolded proteins bind initially to DnaJ; upon interaction with the DnaJ-bound protein, DnaK hydrolyzes its bound ATP, resulting in the formation of a stable complex. GrpE releases ADP from DnaK; ATP binding to DnaK triggers the release of the substrate protein, thus completing the reaction cycle. Several rounds of ATP-dependent interactions between DnaJ, DnaK and GrpE are required for fully efficient folding. This chain is Protein GrpE, found in Prochlorococcus marinus (strain MIT 9211).